The chain runs to 329 residues: uncharacterized protein (329 aa).

The tract at residues 284–303 (SGGGHSEAGGLNAPYDKSKS) is disordered.

This is an uncharacterized protein from Methanocaldococcus jannaschii (strain ATCC 43067 / DSM 2661 / JAL-1 / JCM 10045 / NBRC 100440) (Methanococcus jannaschii).